Here is a 242-residue protein sequence, read N- to C-terminus: Sensory transduction protein LytT (242 aa).

A Response regulatory domain is found at 2 to 116; the sequence is HVLIVDDEPL…KITQVIEKAS (115 aa). Positions 137 to 241 constitute an HTH LytTR-type domain; sequence IPIQGEDRIY…VKEFKEKLGL (105 aa).

In terms of processing, phosphorylated by LytS.

It is found in the cytoplasm. Functionally, member of the two-component regulatory system LytS/LytT that probably regulates genes involved in cell wall metabolism. The polypeptide is Sensory transduction protein LytT (lytT) (Enterococcus faecalis (strain ATCC 700802 / V583)).